Here is a 789-residue protein sequence, read N- to C-terminus: Polyribonucleotide nucleotidyltransferase (789 aa).

The Mg(2+) site is built by D494 and D500. The 60-residue stretch at 561–620 (PRIESIFINKDKIRNVIGSGGKNIREICEKTGARVEIMQDGTVMIYAINNDAVEYAKNMI) folds into the KH domain. Residues 630 to 697 (GKVFDGTVIE…DREYVQLSMR (68 aa)) enclose the S1 motif domain. Residues 709 to 789 (GELYNIRKTN…NEVPRKPRFF (81 aa)) form a disordered region. Basic residues predominate over residues 737-749 (SEKKRRGSGRSRR). The span at 763–780 (NNGFGNGNRSFNDNRNGN) shows a compositional bias: low complexity.

The protein belongs to the polyribonucleotide nucleotidyltransferase family. Mg(2+) serves as cofactor.

It localises to the cytoplasm. It catalyses the reaction RNA(n+1) + phosphate = RNA(n) + a ribonucleoside 5'-diphosphate. Its function is as follows. Involved in mRNA degradation. Catalyzes the phosphorolysis of single-stranded polyribonucleotides processively in the 3'- to 5'-direction. This is Polyribonucleotide nucleotidyltransferase from Ehrlichia ruminantium (strain Gardel).